A 152-amino-acid chain; its full sequence is Large ribosomal subunit protein bL9 (152 aa).

This sequence belongs to the bacterial ribosomal protein bL9 family.

Its function is as follows. Binds to the 23S rRNA. This Synechococcus sp. (strain WH7803) protein is Large ribosomal subunit protein bL9.